The primary structure comprises 659 residues: ATP-binding cassette sub-family D member 3 (659 aa).

Residues 1 to 61 (MAAFSKYLTA…GKKERAVVDK (61 aa)) are interaction with PEX19. The N-linked (GlcNAc...) asparagine glycan is linked to asparagine 12. At lysine 61 the chain carries N6-acetyllysine. A helical membrane pass occupies residues 84 to 104 (GYLLLIAVMLVSRTYCDVWMI). The region spanning 85–372 (YLLLIAVMLV…MLLRMSQALG (288 aa)) is the ABC transmembrane type-1 domain. Residue asparagine 106 is glycosylated (N-linked (GlcNAc...) asparagine). Residues 126–146 (LFNFIAAMPLISLVNNFLKYG) traverse the membrane as a helical segment. N-linked (GlcNAc...) asparagine glycosylation occurs at asparagine 206. A helical transmembrane segment spans residues 224–244 (AIGAQGPASMMAYLLVSGLFL). An N6-acetyllysine modification is found at lysine 260. A helical membrane pass occupies residues 313-333 (MGFIDSIIAKYVATVVGYLVV). Lysine 399 carries the post-translational modification N6-acetyllysine. Serine 424 carries the phosphoserine modification. Positions 434–659 (INTDNIIKFD…ITEDTVEFGS (226 aa)) constitute an ABC transporter domain. 473-480 (GPNGCGKS) contributes to the ATP binding site. An N6-acetyllysine modification is found at lysine 533. Serine 659 is modified (phosphoserine).

The protein belongs to the ABC transporter superfamily. ABCD family. Peroxisomal fatty acyl CoA transporter (TC 3.A.1.203) subfamily. As to quaternary structure, homodimers. Can form heterodimers with ABCD1 and ABCD2. Dimerization is necessary to form an active transporter. Interacts with PEX19; mediates the targeting of ABCD3 to peroxisomes. In terms of processing, ubiquitinated by PEX2 during pexophagy in response to starvation, leading to its degradation.

It localises to the peroxisome membrane. It carries out the reaction a very long-chain fatty acyl-CoA + H2O = a very long-chain fatty acid + CoA + H(+). It catalyses the reaction a very long-chain fatty acid(in) + ATP + H2O = a very long-chain fatty acid(out) + ADP + phosphate + H(+). The catalysed reaction is a long-chain fatty acyl-CoA + H2O = a long-chain fatty acid + CoA + H(+). The enzyme catalyses a long-chain fatty acid(in) + ATP + H2O = a long-chain fatty acid(out) + ADP + phosphate + H(+). It carries out the reaction pristanoyl-CoA + H2O = 2,6,10,14-tetramethylpentadecanoate + CoA + H(+). It catalyses the reaction 2,6,10,14-tetramethylpentadecanoate(in) + ATP + H2O = 2,6,10,14-tetramethylpentadecanoate(out) + ADP + phosphate + H(+). The catalysed reaction is hexadecanedioyl-CoA + H2O = hexadecanedioate + CoA + H(+). The enzyme catalyses hexadecanedioate(in) + ATP + H2O = hexadecanedioate(out) + ADP + phosphate + H(+). It carries out the reaction (5Z,8Z,11Z,14Z,17Z)-eicosapentaenoyl-CoA + H2O = (5Z,8Z,11Z,14Z,17Z)-eicosapentaenoate + CoA + H(+). It catalyses the reaction (5Z,8Z,11Z,14Z,17Z)-eicosapentaenoate(in) + ATP + H2O = (5Z,8Z,11Z,14Z,17Z)-eicosapentaenoate(out) + ADP + phosphate + H(+). The catalysed reaction is (4Z,7Z,10Z,13Z,16Z,19Z)-docosahexaenoyl-CoA + H2O = (4Z,7Z,10Z,13Z,16Z,19Z)-docosahexaenoate + CoA + H(+). The enzyme catalyses (4Z,7Z,10Z,13Z,16Z,19Z)-docosahexaenoate(in) + ATP + H2O = (4Z,7Z,10Z,13Z,16Z,19Z)-docosahexaenoate(out) + ADP + phosphate + H(+). Its function is as follows. Broad substrate specificity ATP-dependent transporter of the ATP-binding cassette (ABC) family that catalyzes the transport of long-chain fatty acids (LCFA)-CoA, dicarboxylic acids-CoA, long-branched-chain fatty acids-CoA and bile acids from the cytosol to the peroxisome lumen for beta-oxydation. Has fatty acyl-CoA thioesterase and ATPase activities. Probably hydrolyzes fatty acyl-CoAs into free fatty acids prior to their ATP-dependent transport into peroxisomes. Thus, play a role in regulation of LCFAs and energy metabolism namely, in the degradation and biosynthesis of fatty acids by beta-oxidation. This chain is ATP-binding cassette sub-family D member 3 (Abcd3), found in Mus musculus (Mouse).